The primary structure comprises 315 residues: Methionyl-tRNA formyltransferase (315 aa).

112 to 115 is a binding site for (6S)-5,6,7,8-tetrahydrofolate; the sequence is SLLP.

The protein belongs to the Fmt family.

The catalysed reaction is L-methionyl-tRNA(fMet) + (6R)-10-formyltetrahydrofolate = N-formyl-L-methionyl-tRNA(fMet) + (6S)-5,6,7,8-tetrahydrofolate + H(+). In terms of biological role, attaches a formyl group to the free amino group of methionyl-tRNA(fMet). The formyl group appears to play a dual role in the initiator identity of N-formylmethionyl-tRNA by promoting its recognition by IF2 and preventing the misappropriation of this tRNA by the elongation apparatus. This is Methionyl-tRNA formyltransferase from Leptospira borgpetersenii serovar Hardjo-bovis (strain JB197).